The primary structure comprises 329 residues: tRNA dimethylallyltransferase (329 aa).

24 to 31 lines the ATP pocket; the sequence is GSTGIGKT. 26–31 contacts substrate; that stretch reads TGIGKT. Positions 49 to 52 are interaction with substrate tRNA; the sequence is DSMQ.

It belongs to the IPP transferase family. In terms of assembly, monomer. It depends on Mg(2+) as a cofactor.

It carries out the reaction adenosine(37) in tRNA + dimethylallyl diphosphate = N(6)-dimethylallyladenosine(37) in tRNA + diphosphate. Functionally, catalyzes the transfer of a dimethylallyl group onto the adenine at position 37 in tRNAs that read codons beginning with uridine, leading to the formation of N6-(dimethylallyl)adenosine (i(6)A). The polypeptide is tRNA dimethylallyltransferase (Methylacidiphilum infernorum (isolate V4) (Methylokorus infernorum (strain V4))).